Consider the following 498-residue polypeptide: MVKIQPDEISSIIRQQIEQYSQEVKVVNVGTVFQVGDGIARIYGLEKVMAGELLEFEDGTVGIALNLEAKNVGAVLMGTGLSVQEGSSVRATGKIAQIPVGEAYLGRVVNALARPIDGKGEISADETRLIESVAPGIITRRSVHEPMQTGLISVDAMIPIGRGQRELIIGDRQTGKTAIALDTILNQKGNGVICVYVAIGQKASSIAQVVTTLEERGSLDYTIIVSATANEPATLQYLAPYTGAALAEYFMYTGRHTLVIYDDLTKQAQAYREMSLLLRRPPGREAYPGDVFYLHSRLLERAAKLNDELGSGSMTALPIVETQEGDVSAYIPTNVISITDGQIFLSADIFNANIRPAINVGISVSRVGSAAQPKAMKQVAGKLKLELAQFAELEAFSQFASDLDQATQNQLARGKRLRELLKQAQNSPLALADQVATIYAGCNGYLDTVETEEVRSFLIEFRQYLNSNKPKFGEIIRETNTLTEEAETILKEALSELL.

170-177 provides a ligand contact to ATP; that stretch reads GDRQTGKT.

It belongs to the ATPase alpha/beta chains family. As to quaternary structure, F-type ATPases have 2 components, CF(1) - the catalytic core - and CF(0) - the membrane proton channel. CF(1) has five subunits: alpha(3), beta(3), gamma(1), delta(1), epsilon(1). CF(0) has four main subunits: a, b, b' and c.

The protein resides in the plastid. The protein localises to the chloroplast thylakoid membrane. It carries out the reaction ATP + H2O + 4 H(+)(in) = ADP + phosphate + 5 H(+)(out). Produces ATP from ADP in the presence of a proton gradient across the membrane. The alpha chain is a regulatory subunit. This is ATP synthase subunit alpha, chloroplastic from Oltmannsiellopsis viridis (Marine flagellate).